A 345-amino-acid polypeptide reads, in one-letter code: IGF-like family receptor 1 (345 aa).

Positions 1–20 are cleaved as a signal peptide; that stretch reads MGPSWLLWTVAVAVLLLTRA. The Extracellular portion of the chain corresponds to 21–163; sequence ASMEASSFCG…SSRPGFVSAS (143 aa). N-linked (GlcNAc...) asparagine glycosylation is present at Asn-87. The disordered stretch occupies residues 106–149; that stretch reads VESPGRTHKQCRKKPVPPKDVCPLKPEDAGASSSPGRWSLGQTT. The segment covering 111 to 121 has biased composition (basic residues); sequence RTHKQCRKKPV. Polar residues predominate over residues 136–149; sequence ASSSPGRWSLGQTT. The helical transmembrane segment at 164–184 threads the bilayer; sequence VLPLAVLPLLLVLLLILAVVL. Residues 185 to 345 lie on the Cytoplasmic side of the membrane; that stretch reads LSLFKRKVRS…DALQVLSKLG (161 aa).

Ubiquitously expressed with higher expression in lymph node. Highly expressed in T-cells and monocytes.

Its subcellular location is the cell membrane. Probable cell membrane receptor for the IGF-like family protein IGFL. The protein is IGF-like family receptor 1 (Igflr1) of Mus musculus (Mouse).